We begin with the raw amino-acid sequence, 585 residues long: Arginine--tRNA ligase (585 aa).

The 'HIGH' region motif lies at 131 to 141 (ANPTGPMHVGH).

Belongs to the class-I aminoacyl-tRNA synthetase family. As to quaternary structure, monomer.

It is found in the cytoplasm. The catalysed reaction is tRNA(Arg) + L-arginine + ATP = L-arginyl-tRNA(Arg) + AMP + diphosphate. The protein is Arginine--tRNA ligase of Brucella abortus (strain S19).